Here is a 244-residue protein sequence, read N- to C-terminus: 5-oxoprolinase subunit A (244 aa).

Belongs to the LamB/PxpA family. Forms a complex composed of PxpA, PxpB and PxpC.

The catalysed reaction is 5-oxo-L-proline + ATP + 2 H2O = L-glutamate + ADP + phosphate + H(+). Catalyzes the cleavage of 5-oxoproline to form L-glutamate coupled to the hydrolysis of ATP to ADP and inorganic phosphate. This is 5-oxoprolinase subunit A from Salmonella choleraesuis (strain SC-B67).